Here is a 353-residue protein sequence, read N- to C-terminus: Photosystem II protein D1 (353 aa).

Thr-2 is subject to N-acetylthreonine. At Thr-2 the chain carries Phosphothreonine. 3 helical membrane passes run 29 to 46 (YIGW…TATS), 118 to 133 (HFLL…EWEL), and 142 to 156 (WIAV…AAAA). His-118 is a binding site for chlorophyll a. Residue Tyr-126 participates in pheophytin a binding. 2 residues coordinate [CaMn4O5] cluster: Asp-170 and Glu-189. Residues 197 to 218 (FHMLGVAGVFGGSLFSAMHGSL) traverse the membrane as a helical segment. His-198 is a chlorophyll a binding site. Residues His-215 and 264 to 265 (SF) each bind a quinone. Residue His-215 coordinates Fe cation. His-272 contributes to the Fe cation binding site. Residues 274 to 288 (FLAAWPVVGIWFTAL) form a helical membrane-spanning segment. Residues His-332, Glu-333, Asp-342, and Ala-344 each contribute to the [CaMn4O5] cluster site. Positions 345–353 (SVEAPSVKA) are excised as a propeptide.

The protein belongs to the reaction center PufL/M/PsbA/D family. As to quaternary structure, PSII is composed of 1 copy each of membrane proteins PsbA, PsbB, PsbC, PsbD, PsbE, PsbF, PsbH, PsbI, PsbJ, PsbK, PsbL, PsbM, PsbT, PsbX, PsbY, PsbZ, Psb30/Ycf12, at least 3 peripheral proteins of the oxygen-evolving complex and a large number of cofactors. It forms dimeric complexes. Requires The D1/D2 heterodimer binds P680, chlorophylls that are the primary electron donor of PSII, and subsequent electron acceptors. It shares a non-heme iron and each subunit binds pheophytin, quinone, additional chlorophylls, carotenoids and lipids. D1 provides most of the ligands for the Mn4-Ca-O5 cluster of the oxygen-evolving complex (OEC). There is also a Cl(-1) ion associated with D1 and D2, which is required for oxygen evolution. The PSII complex binds additional chlorophylls, carotenoids and specific lipids. as cofactor. Post-translationally, tyr-161 forms a radical intermediate that is referred to as redox-active TyrZ, YZ or Y-Z. C-terminally processed by CTPA; processing is essential to allow assembly of the oxygen-evolving complex and thus photosynthetic growth.

It localises to the plastid. The protein localises to the chloroplast thylakoid membrane. The enzyme catalyses 2 a plastoquinone + 4 hnu + 2 H2O = 2 a plastoquinol + O2. Photosystem II (PSII) is a light-driven water:plastoquinone oxidoreductase that uses light energy to abstract electrons from H(2)O, generating O(2) and a proton gradient subsequently used for ATP formation. It consists of a core antenna complex that captures photons, and an electron transfer chain that converts photonic excitation into a charge separation. The D1/D2 (PsbA/PsbD) reaction center heterodimer binds P680, the primary electron donor of PSII as well as several subsequent electron acceptors. The chain is Photosystem II protein D1 from Angiopteris evecta (Mule's foot fern).